The primary structure comprises 108 residues: Transcriptional activator HlyU (108 aa).

In terms of domain architecture, HTH arsR-type spans 13–107; the sequence is EMEKNSAKAV…LLHRLYCQAN (95 aa). Positions 47–66 form a DNA-binding region, H-T-H motif; it reads VGELSSRLELSQSALSQHLA.

In terms of biological role, up-regulates the expression of the hemolysin gene, hlyA, and may promote expression of other virulence determinants in vivo. It may have both positive and negative regulator activities. The chain is Transcriptional activator HlyU (hlyU) from Vibrio cholerae serotype O1 (strain ATCC 39315 / El Tor Inaba N16961).